The chain runs to 255 residues: 1-(5-phosphoribosyl)-5-[(5-phosphoribosylamino)methylideneamino] imidazole-4-carboxamide isomerase (255 aa).

The Proton acceptor role is filled by Asp8. Asp129 (proton donor) is an active-site residue.

This sequence belongs to the HisA/HisF family.

The protein localises to the cytoplasm. It catalyses the reaction 1-(5-phospho-beta-D-ribosyl)-5-[(5-phospho-beta-D-ribosylamino)methylideneamino]imidazole-4-carboxamide = 5-[(5-phospho-1-deoxy-D-ribulos-1-ylimino)methylamino]-1-(5-phospho-beta-D-ribosyl)imidazole-4-carboxamide. Its pathway is amino-acid biosynthesis; L-histidine biosynthesis; L-histidine from 5-phospho-alpha-D-ribose 1-diphosphate: step 4/9. This chain is 1-(5-phosphoribosyl)-5-[(5-phosphoribosylamino)methylideneamino] imidazole-4-carboxamide isomerase, found in Prochlorococcus marinus (strain MIT 9303).